The following is a 295-amino-acid chain: Nucleotide-binding protein LSEI_0959 (295 aa).

Residue 12 to 19 (GMSGAGKT) participates in ATP binding. Position 62–65 (62–65 (DLRS)) interacts with GTP.

It belongs to the RapZ-like family.

Its function is as follows. Displays ATPase and GTPase activities. The chain is Nucleotide-binding protein LSEI_0959 from Lacticaseibacillus paracasei (strain ATCC 334 / BCRC 17002 / CCUG 31169 / CIP 107868 / KCTC 3260 / NRRL B-441) (Lactobacillus paracasei).